Here is a 275-residue protein sequence, read N- to C-terminus: Adenylate kinase 2 (275 aa).

The N-myristoyl glycine moiety is linked to residue G2. The tract at residues K21–K30 is required for cell membrane translocation but dispensable for cell membrane localization. Position 39-44 (G39–T44) interacts with ATP. The interval C59–V97 is NMP. Residues S95–V97, G126–R129, and Q133 contribute to the AMP site. Residue R164 participates in ATP binding. The interval I165–L214 is LID. AMP contacts are provided by R220 and R231.

This sequence belongs to the adenylate kinase family. Monomer. Oligomer. Heterodimer composed of NMT and AK2; AK2 myristoylation stabilizes the complex. In terms of processing, myristoylation is required for cell membrane localization. Post-translationally, may be palmitoylated at Cys-4 which stabilizes cell membrane localization of the myristoylated protein.

It is found in the parasitophorous vacuole membrane. It carries out the reaction AMP + ATP = 2 ADP. Catalyzes the reversible transfer of the terminal phosphate group between ATP and AMP. Has very low activity with CTP, GTP, ITP and UTP and no activity with GMP, UMP or IMP in vitro. This Plasmodium falciparum (isolate 3D7) protein is Adenylate kinase 2.